The following is a 253-amino-acid chain: Amino-acid-binding protein AabA (253 aa).

The signal sequence occupies residues 1-23; the sequence is MPFLKTLFRGALCSIACGASLFC.

The protein belongs to the bacterial solute-binding protein 3 family.

Its subcellular location is the periplasm. This Dichelobacter nodosus (Bacteroides nodosus) protein is Amino-acid-binding protein AabA (aabA).